Here is a 148-residue protein sequence, read N- to C-terminus: Large ribosomal subunit protein bL9 (148 aa).

It belongs to the bacterial ribosomal protein bL9 family.

In terms of biological role, binds to the 23S rRNA. The polypeptide is Large ribosomal subunit protein bL9 (Streptomyces avermitilis (strain ATCC 31267 / DSM 46492 / JCM 5070 / NBRC 14893 / NCIMB 12804 / NRRL 8165 / MA-4680)).